Reading from the N-terminus, the 303-residue chain is tRNA pseudouridine synthase B (303 aa).

D47 serves as the catalytic Nucleophile.

Belongs to the pseudouridine synthase TruB family. Type 1 subfamily.

The enzyme catalyses uridine(55) in tRNA = pseudouridine(55) in tRNA. Responsible for synthesis of pseudouridine from uracil-55 in the psi GC loop of transfer RNAs. This is tRNA pseudouridine synthase B from Legionella pneumophila (strain Paris).